A 415-amino-acid polypeptide reads, in one-letter code: S-inosyl-L-homocysteine hydrolase (415 aa).

Substrate-binding residues include Asp123 and Glu148. 149–151 is an NAD(+) binding site; it reads TTT. Residues Lys178 and Asp182 each contribute to the substrate site. Residues Asn183, 212–217, Glu235, 291–293, and Asn337 contribute to the NAD(+) site; these read GYGWCG and AGH.

This sequence belongs to the adenosylhomocysteinase family. In terms of assembly, exists both as a homotetramer and a homodimer, in a 4:1 ratio. Requires NAD(+) as cofactor.

The protein resides in the cytoplasm. The enzyme catalyses S-inosyl-L-homocysteine + H2O = L-homocysteine + inosine. The protein operates within amino-acid biosynthesis; S-adenosyl-L-methionine biosynthesis. Its function is as follows. Catalyzes the hydrolysis of S-inosyl-L-homocysteine (SIH) to L-homocysteine (Hcy) and inosine. Likely functions in a S-adenosyl-L-methionine (SAM) recycling pathway from S-adenosyl-L-homocysteine (SAH) produced from SAM-dependent methylation reactions. Can also catalyze the reverse reaction in vitro, i.e. the synthesis of SIH from Hcy and inosine. Is specific for SIH and inosine as it is unable to either hydrolyze SAH or synthesize SAH from adenosine and Hcy. This chain is S-inosyl-L-homocysteine hydrolase, found in Methanocaldococcus jannaschii (strain ATCC 43067 / DSM 2661 / JAL-1 / JCM 10045 / NBRC 100440) (Methanococcus jannaschii).